Consider the following 21-residue polypeptide: Peptide Hact-2 (21 aa).

Intrachain disulfides connect C1-C18, C5-C14, and C9-C20.

As to expression, expressed in tentacles.

The protein localises to the nematocyst. The protein resides in the secreted. Functionally, peptide of unknown function. Does not exhibit antimicrobial activity against Escherichia coli and Staphylococcus aureus. Promotes cell proliferation of human fibroblast skin cells. Does not exhibit any effect on voltage-gated ion channels, including potassium, sodium, and calcium channels. In Heliofungia actiniformis (Mushroom coral), this protein is Peptide Hact-2.